A 358-amino-acid chain; its full sequence is ATP-dependent (S)-NAD(P)H-hydrate dehydratase (358 aa).

In terms of domain architecture, YjeF C-terminal spans 63 to 354 (LLQSAKNVIP…QQIHQAFEEL (292 aa)). (6S)-NADPHX is bound by residues glycine 163 and 220–226 (NVVEFDR). ATP contacts are provided by residues 261–265 (KGQHD) and 280–289 (GSNRRCGGQG). Aspartate 290 contacts (6S)-NADPHX.

Belongs to the NnrD/CARKD family. Requires Mg(2+) as cofactor.

It catalyses the reaction (6S)-NADHX + ATP = ADP + phosphate + NADH + H(+). The catalysed reaction is (6S)-NADPHX + ATP = ADP + phosphate + NADPH + H(+). Functionally, catalyzes the dehydration of the S-form of NAD(P)HX at the expense of ATP, which is converted to ADP. Together with NAD(P)HX epimerase, which catalyzes the epimerization of the S- and R-forms, the enzyme allows the repair of both epimers of NAD(P)HX, a damaged form of NAD(P)H that is a result of enzymatic or heat-dependent hydration. The chain is ATP-dependent (S)-NAD(P)H-hydrate dehydratase from Nematostella vectensis (Starlet sea anemone).